Here is a 157-residue protein sequence, read N- to C-terminus: Small ribosomal subunit protein uS7 (157 aa).

It belongs to the universal ribosomal protein uS7 family. Part of the 30S ribosomal subunit. Contacts proteins S9 and S11.

In terms of biological role, one of the primary rRNA binding proteins, it binds directly to 16S rRNA where it nucleates assembly of the head domain of the 30S subunit. Is located at the subunit interface close to the decoding center, probably blocks exit of the E-site tRNA. In Acidovorax ebreus (strain TPSY) (Diaphorobacter sp. (strain TPSY)), this protein is Small ribosomal subunit protein uS7.